Reading from the N-terminus, the 338-residue chain is Ferredoxin--NADP reductase (338 aa).

The FAD site is built by D35, Q43, Y48, A88, F122, D289, and T330.

This sequence belongs to the ferredoxin--NADP reductase type 2 family. In terms of assembly, homodimer. FAD serves as cofactor.

The enzyme catalyses 2 reduced [2Fe-2S]-[ferredoxin] + NADP(+) + H(+) = 2 oxidized [2Fe-2S]-[ferredoxin] + NADPH. The sequence is that of Ferredoxin--NADP reductase from Ehrlichia chaffeensis (strain ATCC CRL-10679 / Arkansas).